A 625-amino-acid polypeptide reads, in one-letter code: tRNA uridine 5-carboxymethylaminomethyl modification enzyme MnmG (625 aa).

FAD is bound by residues 10-15 (GGGHAG), Val122, and Ser177. Residue 271-285 (GPRYCPSIEDKVNRF) coordinates NAD(+). Residue Gln368 coordinates FAD.

This sequence belongs to the MnmG family. Homodimer. Heterotetramer of two MnmE and two MnmG subunits. It depends on FAD as a cofactor.

The protein resides in the cytoplasm. Functionally, NAD-binding protein involved in the addition of a carboxymethylaminomethyl (cmnm) group at the wobble position (U34) of certain tRNAs, forming tRNA-cmnm(5)s(2)U34. The polypeptide is tRNA uridine 5-carboxymethylaminomethyl modification enzyme MnmG (Wolinella succinogenes (strain ATCC 29543 / DSM 1740 / CCUG 13145 / JCM 31913 / LMG 7466 / NCTC 11488 / FDC 602W) (Vibrio succinogenes)).